A 321-amino-acid polypeptide reads, in one-letter code: Phospho-N-acetylmuramoyl-pentapeptide-transferase (321 aa).

A run of 10 helical transmembrane segments spans residues 1 to 21 (MVYL…PVLI), 50 to 70 (MGGL…IIFI), 76 to 96 (IILL…DDYI), 112 to 132 (FLAQ…FNLT), 140 to 160 (IPFI…IVFW), 173 to 193 (GLDG…AIMA), 198 to 218 (ATSI…FLPF), 225 to 245 (VFMG…ISIM), 250 to 270 (LSLL…MIQV), and 300 to 320 (VVTV…WIGV).

The protein belongs to the glycosyltransferase 4 family. MraY subfamily. Mg(2+) is required as a cofactor.

Its subcellular location is the cell membrane. It catalyses the reaction UDP-N-acetyl-alpha-D-muramoyl-L-alanyl-gamma-D-glutamyl-L-lysyl-D-alanyl-D-alanine + di-trans,octa-cis-undecaprenyl phosphate = Mur2Ac(oyl-L-Ala-gamma-D-Glu-L-Lys-D-Ala-D-Ala)-di-trans,octa-cis-undecaprenyl diphosphate + UMP. It participates in cell wall biogenesis; peptidoglycan biosynthesis. Its function is as follows. Catalyzes the initial step of the lipid cycle reactions in the biosynthesis of the cell wall peptidoglycan: transfers peptidoglycan precursor phospho-MurNAc-pentapeptide from UDP-MurNAc-pentapeptide onto the lipid carrier undecaprenyl phosphate, yielding undecaprenyl-pyrophosphoryl-MurNAc-pentapeptide, known as lipid I. The polypeptide is Phospho-N-acetylmuramoyl-pentapeptide-transferase (Staphylococcus saprophyticus subsp. saprophyticus (strain ATCC 15305 / DSM 20229 / NCIMB 8711 / NCTC 7292 / S-41)).